Consider the following 76-residue polypeptide: Neuromacin-like protein (76 aa).

4 disulfide bridges follow: Cys18–Cys25, Cys40–Cys44, Cys54–Cys61, and Cys72–Cys74.

This sequence belongs to the macin family.

Its subcellular location is the secreted. The sequence is that of Neuromacin-like protein from Aplysia californica (California sea hare).